The sequence spans 272 residues: F-actin-capping protein subunit beta (272 aa).

S2 is subject to N-acetylserine. S2 carries the phosphoserine modification. N6-acetyllysine is present on K235. V263 carries the phosphoserine modification.

This sequence belongs to the F-actin-capping protein beta subunit family. Component of the F-actin capping complex, composed of a heterodimer of an alpha and a beta subunit. Subunit of dynactin, a multiprotein complex part of a tripartite complex with dynein and a adapter, such as BICDL1, BICD2 or HOOK3. The dynactin complex is built around ACTR1A/ACTB filament and consists of an actin-related filament composed of a shoulder domain, a pointed end and a barbed end. Its length is defined by its flexible shoulder domain. The soulder is composed of 2 DCTN1 subunits, 4 DCTN2 and 2 DCTN3. The 4 DCNT2 (via N-terminus) bind the ACTR1A filament and act as molecular rulers to determine the length. The pointed end is important for binding dynein-dynactin cargo adapters. Consists of 4 subunits: ACTR10, DCNT4, DCTN5 and DCTN6. The barbed end is composed of a CAPZA1:CAPZB heterodimers, which binds ACTR1A/ACTB filament and dynactin and stabilizes dynactin. Interacts with ARHGAP17. Interaction with RCSD1/CAPZIP. Component of the WASH complex, composed of F-actin-capping protein subunit alpha (CAPZA1, CAPZA2 or CAPZA3), F-actin-capping protein subunit beta (CAPZB), WASH (WASHC1, WASH2P, WASH3P, WASH4P, WASH5P or WASH6P), WASHC2 (WASHC2A or WASHC2C), WASHC3, WASHC4 and WASHC5. Interacts with ACTG1. Directly interacts with CRACD; this interaction decreases binding to actin.

It localises to the cytoplasm. The protein resides in the cytoskeleton. It is found in the myofibril. The protein localises to the sarcomere. Its function is as follows. F-actin-capping proteins bind in a Ca(2+)-independent manner to the fast growing ends of actin filaments (barbed end) thereby blocking the exchange of subunits at these ends. Unlike other capping proteins (such as gelsolin and severin), these proteins do not sever actin filaments. Plays a role in the regulation of cell morphology and cytoskeletal organization. Forms, with CAPZB, the barbed end of the fast growing ends of actin filaments in the dynactin complex and stabilizes dynactin structure. The dynactin multiprotein complex activates the molecular motor dynein for ultra-processive transport along microtubules. The polypeptide is F-actin-capping protein subunit beta (Homo sapiens (Human)).